The sequence spans 358 residues: Peptide chain release factor 1 (358 aa).

An N5-methylglutamine modification is found at glutamine 234.

It belongs to the prokaryotic/mitochondrial release factor family. In terms of processing, methylated by PrmC. Methylation increases the termination efficiency of RF1.

The protein resides in the cytoplasm. Functionally, peptide chain release factor 1 directs the termination of translation in response to the peptide chain termination codons UAG and UAA. The protein is Peptide chain release factor 1 of Akkermansia muciniphila (strain ATCC BAA-835 / DSM 22959 / JCM 33894 / BCRC 81048 / CCUG 64013 / CIP 107961 / Muc).